Consider the following 398-residue polypeptide: Glucose-1-phosphate adenylyltransferase (398 aa).

Alpha-D-glucose 1-phosphate contacts are provided by residues Tyr100, Gly165, 180–181 (EK), and Ser191.

It belongs to the bacterial/plant glucose-1-phosphate adenylyltransferase family. Homotetramer.

It carries out the reaction alpha-D-glucose 1-phosphate + ATP + H(+) = ADP-alpha-D-glucose + diphosphate. The protein operates within glycan biosynthesis; glycogen biosynthesis. In terms of biological role, involved in the biosynthesis of ADP-glucose, a building block required for the elongation reactions to produce glycogen. Catalyzes the reaction between ATP and alpha-D-glucose 1-phosphate (G1P) to produce pyrophosphate and ADP-Glc. This chain is Glucose-1-phosphate adenylyltransferase, found in Desulfitobacterium hafniense (strain DSM 10664 / DCB-2).